The sequence spans 537 residues: Putative cysteine ligase BshC (537 aa).

Positions 417 to 457 (ASEQFLNELDQLEAQQKETYERLAAEVQGNEDNKNLVEKNN) form a coiled coil.

It belongs to the BshC family.

Its function is as follows. Involved in bacillithiol (BSH) biosynthesis. May catalyze the last step of the pathway, the addition of cysteine to glucosamine malate (GlcN-Mal) to generate BSH. This chain is Putative cysteine ligase BshC, found in Staphylococcus carnosus (strain TM300).